A 440-amino-acid chain; its full sequence is uncharacterized protein (440 aa).

10 consecutive transmembrane segments (helical) span residues 26–46 (NGLI…SSTF), 59–79 (FVFW…NGVL), 96–116 (FFLG…LKLK), 138–158 (LTLS…SIYL), 211–231 (FLVF…YLFA), 241–261 (LRKP…VGII), 263–283 (WIII…FVIF), 284–304 (WVIK…SLTI), 394–414 (FLII…SVFI), and 418–438 (IVQI…FTFI).

This sequence to M.pneumoniae MPN_087.

It is found in the cell membrane. This is an uncharacterized protein from Mycoplasma pneumoniae (strain ATCC 29342 / M129 / Subtype 1) (Mycoplasmoides pneumoniae).